The following is a 501-amino-acid chain: Cytochrome P450 monooxygenase esdpH (501 aa).

Residues 5 to 22 form a helical membrane-spanning segment; it reads RVGILIIGVLATATFWLC. C446 lines the heme pocket.

Belongs to the cytochrome P450 family. Requires heme as cofactor.

Its subcellular location is the membrane. It participates in secondary metabolite biosynthesis; terpenoid biosynthesis. Its function is as follows. Cytochrome P450 monooxygenase; part of the cluster that mediates the biosynthesis of shearones, diterpenoid pyrones (DPs) which are structurally diverse meroterpenoids consisting of a diterpene linked by a pyrone, and which may exhibit a range of bioactivities. Whitin the pathway, esdpH takes part in the molecular scaffold modification via the hydroxylation at C-6' and can transform shearone C into shearone E, shearone D into shearone F, and shearone H into shearone I, the latter being the final product of the pathway. The molecular scaffold is commonly biosynthesized by a series of enzymes including the non-reducing polyketide synthase (NR-PKS) esdpA that generates an alpha-pyrone; the prenyltransferase esdpC that attaches a geranylgeranyl pyrophosphate (GGPP) produced by the GGPP synthase (GGPPS) esdpD onto the pyrone unit; the FAD-dependent monooxygenase esdpE that converts an olefin on the diterpene unit into an epoxide; and the terpene cyclase esdpB that catalyzes the cyclization reactions to give the molecular backbone shearone A. In the modification steps, esdpF oxidizes the hydroxy group to a ketone at C-3 and esdpG then attaches hydroxy groups at both C-11 and C-12. After that, esdpI hydroxylates at C-20 and esdpH hydroxylates at C-6'. The ether bridge is generated by nucleophilic attack of the hydroxy group at C-20 to the carbonyl carbon at C-3. EsdpH can also functions prior to esdpI. The different combinations of these modification enzymes lead to the production of diverse shearone derivatives, shearone I being the end product of the pathway. The alpha-ketoglutarate-dependent dioxygenase esdpJ seems not to be involved in this pathway. The protein is Cytochrome P450 monooxygenase esdpH of Penicillium shearii (Eupenicillium shearii).